The following is a 94-amino-acid chain: Transcription factor CPC (94 aa).

Residues 1-10 are S1, required for cell-to-cell movements; sequence MFRSDKAEKM. A compositionally biased stretch (basic and acidic residues) spans 1-11; that stretch reads MFRSDKAEKMD. A disordered region spans residues 1–25; that stretch reads MFRSDKAEKMDKRRRRQSKAKASCS. In terms of domain architecture, Myb-like spans 30–80; sequence SIEWEAVKMSEEEEDLISRMYKLVGDRWELIAGRIPGRTPEEIERYWLMKH. The segment at 76-79 is S2, required for cell-to-cell movements and nuclear localization; it reads WLMK.

As to quaternary structure, interacts with GL3 and BHLH2. Interacts with SIEL. As to expression, expressed in trichomes and in young developing leaves, as well as in root hair and stele cells (pericycle and vascular tissues). Expressed in epidermal root hairless cells (atrichoblasts) and moves to root hair cells (trichoblasts) by a cell-to-cell movement through plasmodesmata (at protein level).

Its subcellular location is the nucleus. Transcription factor. Determines the fate of epidermal cell differentiation. Represses trichome development by lateral inhibition. Together with GL3 or BHLH2, promotes the formation of hair developing cells (H position) in root epidermis, probably by inhibiting non-hair cell formation. Represses the expression of GL2 and WER in H cells. Positively regulates stomatal formation in the hypocotyl. The polypeptide is Transcription factor CPC (CPC) (Arabidopsis thaliana (Mouse-ear cress)).